The primary structure comprises 227 residues: Orotidine 5'-phosphate decarboxylase (227 aa).

Substrate contacts are provided by residues D12, K34, 61 to 70 (DLKLHDIPNT), T117, R178, Q187, G207, and R208. K63 (proton donor) is an active-site residue.

It belongs to the OMP decarboxylase family. Type 1 subfamily. In terms of assembly, homodimer.

It catalyses the reaction orotidine 5'-phosphate + H(+) = UMP + CO2. Its pathway is pyrimidine metabolism; UMP biosynthesis via de novo pathway; UMP from orotate: step 2/2. In terms of biological role, catalyzes the decarboxylation of orotidine 5'-monophosphate (OMP) to uridine 5'-monophosphate (UMP). This chain is Orotidine 5'-phosphate decarboxylase, found in Anaeromyxobacter sp. (strain K).